Reading from the N-terminus, the 360-residue chain is Peptide chain release factor 1 (360 aa).

Position 235 is an N5-methylglutamine (Q235). The tract at residues 285-311 (KRQQAQASERRNLLGSGDRSDRHRTYN) is disordered. The span at 292–308 (SERRNLLGSGDRSDRHR) shows a compositional bias: basic and acidic residues.

Belongs to the prokaryotic/mitochondrial release factor family. Post-translationally, methylated by PrmC. Methylation increases the termination efficiency of RF1.

It is found in the cytoplasm. Its function is as follows. Peptide chain release factor 1 directs the termination of translation in response to the peptide chain termination codons UAG and UAA. The polypeptide is Peptide chain release factor 1 (Hamiltonella defensa subsp. Acyrthosiphon pisum (strain 5AT)).